The following is a 1400-amino-acid chain: DNA-directed RNA polymerase subunit beta' (1400 aa).

Residues Cys71, Cys73, Cys86, and Cys89 each coordinate Zn(2+). Residues Asp462, Asp464, and Asp466 each contribute to the Mg(2+) site. Zn(2+)-binding residues include Cys811, Cys885, Cys892, and Cys895.

It belongs to the RNA polymerase beta' chain family. In terms of assembly, the RNAP catalytic core consists of 2 alpha, 1 beta, 1 beta' and 1 omega subunit. When a sigma factor is associated with the core the holoenzyme is formed, which can initiate transcription. Mg(2+) is required as a cofactor. The cofactor is Zn(2+).

The catalysed reaction is RNA(n) + a ribonucleoside 5'-triphosphate = RNA(n+1) + diphosphate. In terms of biological role, DNA-dependent RNA polymerase catalyzes the transcription of DNA into RNA using the four ribonucleoside triphosphates as substrates. The sequence is that of DNA-directed RNA polymerase subunit beta' from Brucella canis (strain ATCC 23365 / NCTC 10854 / RM-666).